The primary structure comprises 89 residues: Chromosomal protein MC1a (89 aa).

Protects DNA against thermal denaturation and modulates transcription. The chain is Chromosomal protein MC1a from Methanothrix soehngenii (Methanosaeta concilii).